Consider the following 232-residue polypeptide: Noggin (232 aa).

The N-terminal stretch at 1 to 27 (MERCPSLGVTLYALVVVLGLRATPAGG) is a signal peptide. The N-linked (GlcNAc...) asparagine glycan is linked to Asn-62. The interval 77–96 (GFMATSPPEDRPGGGGGAAG) is disordered. 4 cysteine pairs are disulfide-bonded: Cys-155–Cys-192, Cys-178–Cys-228, Cys-184–Cys-230, and Cys-207–Cys-215.

Belongs to the noggin family. Homodimer. Interacts with GDF5; inhibits chondrocyte differentiation.

The protein localises to the secreted. Inhibitor of bone morphogenetic proteins (BMP) signaling which is required for growth and patterning of the neural tube and somite. Essential for cartilage morphogenesis and joint formation. Inhibits chondrocyte differentiation through its interaction with GDF5 and, probably, GDF6. This chain is Noggin (NOG), found in Homo sapiens (Human).